A 259-amino-acid polypeptide reads, in one-letter code: Protein unc-50 homolog (259 aa).

The residue at position 1 (Met1) is an N-acetylmethionine. At 1–82 (MLPSTSLSSS…TKDQWARDDP (82 aa)) the chain is on the cytoplasmic side. Residue Ser6 is modified to Phosphoserine. Residues 83-103 (AFLVLLSIWLCVSTIGFGFVL) form a helical membrane-spanning segment. Residues 104–112 (DMGFFETIK) are Lumenal-facing. Residues 113-133 (LLLWVVFIDCVGVGLLISTLM) form a helical membrane-spanning segment. Over 134-163 (WFVSNKYLVKRQSRDYDVEWGYAFDVHLNA) the chain is Cytoplasmic. A helical transmembrane segment spans residues 164–184 (FYPLLVILHFIQLFFINHVIL). The Lumenal portion of the chain corresponds to 185 to 187 (TDT). The chain crosses the membrane as a helical span at residues 188 to 208 (FIGYLVGNTLWLIAVGYYIYV). The Cytoplasmic segment spans residues 209 to 222 (TFLGYSALPFLKNT). A helical membrane pass occupies residues 223-243 (VILLYPFAPLMVLYGLSLALG). The Lumenal segment spans residues 244–259 (WNFTHTLCSFYKYRVK).

The protein belongs to the unc-50 family. As to expression, highly expressed in periodontal ligament and bone marrow, but not in gingival fibroblasts.

It is found in the nucleus inner membrane. It localises to the golgi apparatus membrane. In terms of biological role, involved in the cell surface expression of neuronal nicotinic receptors. Binds RNA. The protein is Protein unc-50 homolog (Unc50) of Mus musculus (Mouse).